The chain runs to 420 residues: Probable endo-beta-1,4-glucanase celB (420 aa).

The first 18 residues, Met1–Gly18, serve as a signal peptide directing secretion. A glycan (N-linked (GlcNAc...) asparagine) is linked at Asn118. The active-site Nucleophile is Glu215. The Proton donor role is filled by Glu220. 3 N-linked (GlcNAc...) asparagine glycosylation sites follow: Asn234, Asn293, and Asn383.

The protein belongs to the glycosyl hydrolase 7 (cellulase C) family.

It is found in the secreted. It catalyses the reaction Endohydrolysis of (1-&gt;4)-beta-D-glucosidic linkages in cellulose, lichenin and cereal beta-D-glucans.. Functionally, has endoglucanase activity on substrates containing beta-1,4 glycosidic bonds, like in carboxymethylcellulose (CMC), hydroxyethylcellulose (HEC) and beta-glucan. Involved in the degradation of complex natural cellulosic substrates. This chain is Probable endo-beta-1,4-glucanase celB (celB), found in Aspergillus terreus (strain NIH 2624 / FGSC A1156).